We begin with the raw amino-acid sequence, 290 residues long: Tubulin polyglutamylase complex subunit 1 (290 aa).

Residues 1–30 form a disordered region; the sequence is MAAVEKRRQAVPPPAGFTDSGRQSVSRAAG. Phosphoserine occurs at positions 34 and 266.

As to quaternary structure, part of the neuronal tubulin polyglutamylase complex which contains TPGS1, TPGS2, TTLL1, LRRC49 and NICN1. Interacts with PCM1, CSTPP1 and LRRC49.

Its subcellular location is the cytoplasm. It localises to the cytoskeleton. It is found in the cilium axoneme. The protein localises to the flagellum axoneme. The protein resides in the cilium basal body. Its subcellular location is the flagellum basal body. It localises to the cell projection. It is found in the axon. The protein localises to the dendrite. The protein resides in the microtubule organizing center. Its subcellular location is the centrosome. It localises to the centriolar satellite. In terms of biological role, subunit of the tubulin polyglutamylase complex (TPGC). The complex mediates cilia and flagella polyglutamylation which is essential for their biogenesis and motility. May act in the targeting of the tubulin polyglutamylase complex. Required for the development of the spermatid flagellum. In Homo sapiens (Human), this protein is Tubulin polyglutamylase complex subunit 1.